A 213-amino-acid chain; its full sequence is Superoxide dismutase [Fe] (213 aa).

Positions 26, 73, 156, and 160 each coordinate Fe cation.

The protein belongs to the iron/manganese superoxide dismutase family. In terms of assembly, homodimer. It depends on Fe cation as a cofactor.

The catalysed reaction is 2 superoxide + 2 H(+) = H2O2 + O2. In terms of biological role, destroys superoxide anion radicals which are normally produced within the cells and which are toxic to biological systems. This Helicobacter pylori (strain J99 / ATCC 700824) (Campylobacter pylori J99) protein is Superoxide dismutase [Fe] (sodB).